The primary structure comprises 160 residues: Zinc finger A20 and AN1 domain-containing stress-associated protein 6 (160 aa).

The A20-type zinc-finger motif lies at 18–52 (PEAPILCVNNCGFFGSRMTENMCSKCYRDTVKAKT). Residues Cys24, Cys28, Cys40, and Cys43 each contribute to the Zn(2+) site. The disordered stretch occupies residues 73 to 94 (EVTDGGSGSVADGKQVMEEDTP). Residues 95 to 141 (KPPSNRCLSCRKKVGLTGFKCRCGGTFCSMHRYADSHKCTFDYKQVG) form an AN1-type zinc finger. Zn(2+)-binding residues include Cys101, Cys104, Cys115, Cys117, Cys122, His125, His131, and Cys133.

Functionally, may be involved in environmental stress response. This chain is Zinc finger A20 and AN1 domain-containing stress-associated protein 6 (SAP6), found in Oryza sativa subsp. japonica (Rice).